The following is a 154-amino-acid chain: Movement protein (154 aa).

Disordered stretches follow at residues 83–103 (SSPT…HTRP) and 123–154 (WVAT…GRVR).

It belongs to the luteoviruses movement protein family.

Transports viral genome to neighboring plant cells directly through plasmosdesmata, without any budding. The movement protein allows efficient cell to cell propagation, by bypassing the host cell wall barrier. The chain is Movement protein from Barley yellow dwarf virus (isolate MAV) (BYDV).